The following is a 145-amino-acid chain: 3-hydroxyacyl-[acyl-carrier-protein] dehydratase FabZ (145 aa).

His-47 is an active-site residue.

Belongs to the thioester dehydratase family. FabZ subfamily.

The protein localises to the cytoplasm. The enzyme catalyses a (3R)-hydroxyacyl-[ACP] = a (2E)-enoyl-[ACP] + H2O. Functionally, involved in unsaturated fatty acids biosynthesis. Catalyzes the dehydration of short chain beta-hydroxyacyl-ACPs and long chain saturated and unsaturated beta-hydroxyacyl-ACPs. This chain is 3-hydroxyacyl-[acyl-carrier-protein] dehydratase FabZ, found in Methylobacillus flagellatus (strain ATCC 51484 / DSM 6875 / VKM B-1610 / KT).